We begin with the raw amino-acid sequence, 153 residues long: MAKETQLQVEAIKNGTVIDHIPAQIGIKVLKLFDMHNSSQRVTIGLNLPSSALGHKDLLKIENVFINEEQASKLALYAPHATVNQIENYEVVKKLALELPEKVNNVFECPNSNCITHNEPVASSFQVFEKKEEIRLKCKYCEKVFAREIVTER.

Zn(2+) is bound by residues C109, C114, C138, and C141.

Belongs to the PyrI family. In terms of assembly, contains catalytic and regulatory chains. Requires Zn(2+) as cofactor.

Its function is as follows. Involved in allosteric regulation of aspartate carbamoyltransferase. This is Aspartate carbamoyltransferase regulatory chain from Vibrio campbellii (strain ATCC BAA-1116).